The sequence spans 357 residues: Guanine nucleotide-binding protein G(o) subunit alpha (357 aa).

G2 is lipidated: N-myristoyl glycine. C3 carries the S-palmitoyl cysteine lipid modification. Residues 32-357 (KDIKLLLLGA…ANNLRGCGLY (326 aa)) enclose the G-alpha domain. Positions 35–48 (KLLLLGAGESGKST) are G1 motif. Residues 40–47 (GAGESGKS), 179–185 (LRTRVKT), 204–208 (DVGGQ), 273–276 (NKKD), and A329 contribute to the GTP site. Mg(2+) contacts are provided by S47 and T185. A G2 motif region spans residues 177–185 (DILRTRVKT). The segment at 200-209 (FKLFDVGGQR) is G3 motif. The segment at 269-276 (ILFLNKKD) is G4 motif. Positions 327–332 (TCATDT) are G5 motif.

It belongs to the G-alpha family. G(i/o/t/z) subfamily. As to quaternary structure, g proteins are composed of 3 units; alpha, beta and gamma. The alpha chain contains the guanine nucleotide binding site.

Guanine nucleotide-binding proteins (G proteins) are involved as modulators or transducers in various transmembrane signaling systems. The G(o) protein function is not clear. The sequence is that of Guanine nucleotide-binding protein G(o) subunit alpha (SCGOA) from Mizuhopecten yessoensis (Japanese scallop).